A 996-amino-acid chain; its full sequence is Leucine-rich repeat receptor-like kinase protein THICK TASSEL DWARF1 (996 aa).

Positions 1 to 26 (MPPPTFLLGLLLLLLLAAAAPAPASA) are cleaved as a signal peptide. LRR repeat units lie at residues 78-103 (TSRV…VALL), 104-127 (DALA…LASM), 128-151 (PALR…PPAA), 153-178 (FPAL…APHA), 180-201 (SLRY…TFGD), 202-226 (LAAL…LSRL), 251-275 (LQSL…LARL), 276-299 (SRLD…LGAL), 300-323 (TSLR…FAAL), 325-349 (NLKL…DFPF), 351-371 (EVLQ…LGRN), 372-395 (GRLK…LCAG), 397-419 (NLQL…LGDC), 420-443 (KTLT…LFDL), 445-466 (QANM…VIAG), 467-490 (DKIG…IGNL), 491-514 (PALQ…IGRL), 516-538 (NLTR…LMGC), 539-562 (ASLG…VTSL), 563-586 (KILC…MANM), and 587-611 (TSLT…QFLV). Residues 646-666 (KKLLVWLVVLLTLLVLAVLGA) form a helical membrane-spanning segment. One can recognise a Protein kinase domain in the interval 703–978 (LKEDNIIGKG…TMREVVHMLS (276 aa)). ATP is bound by residues 709 to 717 (IGKGGAGIV) and lysine 731. Catalysis depends on aspartate 828, which acts as the Proton acceptor.

The protein belongs to the protein kinase superfamily. Ser/Thr protein kinase family. Highly expressed in the apex of the vegetative seedlings. Lower expression in young leaves, ears and tassels, embryos and roots. Not expressed in the shoot meristem itself. Detected in the three outermost layers of the inflorescence meristem, and on its flanks at positions of prospective spikelet pair meristems. Not confined to meristematic cells but also detected in primordia of glumes, lemmas and stamens.

Its subcellular location is the membrane. It carries out the reaction L-seryl-[protein] + ATP = O-phospho-L-seryl-[protein] + ADP + H(+). The enzyme catalyses L-threonyl-[protein] + ATP = O-phospho-L-threonyl-[protein] + ADP + H(+). Functionally, receptor-like kinase protein that regulates meristem size during inflorescence and flower development. Promotes vegetative meristem growth and restricts inflorescence and floral meristem growth. Based on additive and synergistic phenotypes of double mutants, it is probable that unlike CLV1 and CLV2 in A.thaliana, TD1 and FAE2 do not function exclusively in a single pathway. However, KN-1 and TD1 do function in a linear pathway to maintain vegetative meristem homeostasis, but they may interact with different partners during development. This Zea mays (Maize) protein is Leucine-rich repeat receptor-like kinase protein THICK TASSEL DWARF1 (TD1).